The sequence spans 343 residues: Phenylalanine--tRNA ligase alpha subunit (343 aa).

E264 is a binding site for Mg(2+).

The protein belongs to the class-II aminoacyl-tRNA synthetase family. Phe-tRNA synthetase alpha subunit type 1 subfamily. Tetramer of two alpha and two beta subunits. Requires Mg(2+) as cofactor.

It localises to the cytoplasm. It catalyses the reaction tRNA(Phe) + L-phenylalanine + ATP = L-phenylalanyl-tRNA(Phe) + AMP + diphosphate + H(+). This Azoarcus sp. (strain BH72) protein is Phenylalanine--tRNA ligase alpha subunit.